The chain runs to 727 residues: Glycerol-3-phosphate dehydrogenase, mitochondrial (727 aa).

The transit peptide at 1-42 (MAFQKAVKGTILVGGGALATVLGLSQFAHYRRKQMNLAYVKA) directs the protein to the mitochondrion. FAD is bound at residue 71–99 (DILVIGGGATGSGCALDAVTRGLKTALVE). At tyrosine 601 the chain carries Phosphotyrosine. 2 consecutive EF-hand domains span residues 623-658 (SDID…INVQ) and 659-694 (MDEN…IQKG). Positions 672, 674, 676, 678, and 683 each coordinate Ca(2+).

Belongs to the FAD-dependent glycerol-3-phosphate dehydrogenase family. It depends on FAD as a cofactor.

Its subcellular location is the mitochondrion. It carries out the reaction a quinone + sn-glycerol 3-phosphate = dihydroxyacetone phosphate + a quinol. Its pathway is polyol metabolism; glycerol degradation via glycerol kinase pathway; glycerone phosphate from sn-glycerol 3-phosphate (anaerobic route): step 1/1. Its activity is regulated as follows. Calcium-binding enhance the activity of the enzyme. In terms of biological role, calcium-responsive mitochondrial glycerol-3-phosphate dehydrogenase which seems to be a key component of the pancreatic beta-cell glucose-sensing device. The protein is Glycerol-3-phosphate dehydrogenase, mitochondrial of Homo sapiens (Human).